The following is a 63-amino-acid chain: Large ribosomal subunit protein uL29 (63 aa).

The protein belongs to the universal ribosomal protein uL29 family.

The sequence is that of Large ribosomal subunit protein uL29 from Bordetella pertussis (strain Tohama I / ATCC BAA-589 / NCTC 13251).